A 194-amino-acid chain; its full sequence is Peptidyl-tRNA hydrolase (194 aa).

Residue Tyr-17 participates in tRNA binding. The Proton acceptor role is filled by His-22. Residues Tyr-69, Asn-71, and Asn-117 each coordinate tRNA.

The protein belongs to the PTH family. In terms of assembly, monomer.

It localises to the cytoplasm. It catalyses the reaction an N-acyl-L-alpha-aminoacyl-tRNA + H2O = an N-acyl-L-amino acid + a tRNA + H(+). Functionally, hydrolyzes ribosome-free peptidyl-tRNAs (with 1 or more amino acids incorporated), which drop off the ribosome during protein synthesis, or as a result of ribosome stalling. Catalyzes the release of premature peptidyl moieties from peptidyl-tRNA molecules trapped in stalled 50S ribosomal subunits, and thus maintains levels of free tRNAs and 50S ribosomes. This Paenarthrobacter aurescens (strain TC1) protein is Peptidyl-tRNA hydrolase.